Consider the following 387-residue polypeptide: Chaperone protein DnaJ (387 aa).

The region spanning 5 to 70 is the J domain; it reads DYYEVLGLQK…DKKAKYDQFG (66 aa). The CR-type zinc finger occupies 144–226; that stretch reads GCEKEISITR…CKGKGTVRKN (83 aa). Zn(2+) contacts are provided by C157, C160, C174, C177, C200, C203, C214, and C217. 4 CXXCXGXG motif repeats span residues 157-164, 174-181, 200-207, and 214-221; these read CETCHGTG, CPKCNGSG, CDQCGGTG, and CPDCKGKG.

The protein belongs to the DnaJ family. As to quaternary structure, homodimer. It depends on Zn(2+) as a cofactor.

Its subcellular location is the cytoplasm. Functionally, participates actively in the response to hyperosmotic and heat shock by preventing the aggregation of stress-denatured proteins and by disaggregating proteins, also in an autonomous, DnaK-independent fashion. Unfolded proteins bind initially to DnaJ; upon interaction with the DnaJ-bound protein, DnaK hydrolyzes its bound ATP, resulting in the formation of a stable complex. GrpE releases ADP from DnaK; ATP binding to DnaK triggers the release of the substrate protein, thus completing the reaction cycle. Several rounds of ATP-dependent interactions between DnaJ, DnaK and GrpE are required for fully efficient folding. Also involved, together with DnaK and GrpE, in the DNA replication of plasmids through activation of initiation proteins. The protein is Chaperone protein DnaJ of Clostridium perfringens (strain 13 / Type A).